The sequence spans 323 residues: Transcription factor MYB108 (323 aa).

HTH myb-type domains are found at residues 16-68 (EMDL…LNYL) and 69-123 (RPDV…QKHA). 2 DNA-binding regions (H-T-H motif) span residues 44–68 (WNSL…LNYL) and 96–119 (WSKI…RTRV).

As to quaternary structure, interacts with BOI, but not with BRG1. Post-translationally, ubiquitinated in vitro by BOI. As to expression, expressed specifically in flowers. Restricted to anthers in maturing flowers. Strongest expression in the vascular and connective tissue where the anther attaches to the filament. Not detected in pollen.

The protein localises to the nucleus. Functionally, transcription factor contributing to the regulation of stamen maturation and male fertility in response to jasmonate signaling. Required for correct timing of anther dehiscence. Acts as a negative regulator of abscisic acid-induced cell death. Not involved in the regulation of BOI. Regulated by MYB21 and at a lower level by MYB24. Negatively regulated by the proteasome in an SCF(COI1) E3 ubiquitin-protein ligase complex-dependent manner. The chain is Transcription factor MYB108 (MYB108) from Arabidopsis thaliana (Mouse-ear cress).